Consider the following 69-residue polypeptide: uncharacterized protein (69 aa).

The protein localises to the mitochondrion. This is an uncharacterized protein from Marchantia polymorpha (Common liverwort).